The chain runs to 246 residues: Mast cell protease 1 (246 aa).

An N-terminal signal peptide occupies residues 1-18 (MQALLFLLALLWPPEAGA). A propeptide spans 19–20 (EE) (activation peptide). A Peptidase S1 domain is found at 21–244 (IIGGVESKPH…YVPWINLVIR (224 aa)). Cysteines 50 and 66 form a disulfide. Catalysis depends on charge relay system residues His-65 and Asp-109. Intrachain disulfides connect Cys-143/Cys-208 and Cys-174/Cys-187. Catalysis depends on Ser-202, which acts as the Charge relay system.

This sequence belongs to the peptidase S1 family. Granzyme subfamily.

The chain is Mast cell protease 1 from Meriones unguiculatus (Mongolian jird).